The following is a 210-amino-acid chain: MSSIVEHVVLFKLNDDDVDSGKINSMVNGINELVNLDQVLHLYCGSIHRLITTTASDFTHVLHSRYRSKEDLNAYAIHPDHVRVVKESESIREDIMAVDWIAEQAPEALAPPLGSIGKITLLKLKENVMEEAKLEIMEVMKEKFEGIDQITVGENFSPGRSKDFSIGSISYFRDLGEIEAVDDQMKLQNDKIRDYVDDTIVVEFNVPSSS.

2 consecutive Stress-response A/B barrel domains span residues 5–100 (VEHV…AVDW) and 116–204 (IGKI…VVEF).

As to quaternary structure, homodimer.

It is found in the cytoplasm. Its subcellular location is the cytosol. Functionally, involved in defense against fungal pathogens. Possesses antifungal activity against diverse pathogenic fungi. The protein is Stress-response A/B barrel domain-containing protein DABB1 of Arabidopsis thaliana (Mouse-ear cress).